The sequence spans 295 residues: Nucleotide-binding protein LACR_1047 (295 aa).

Residue G12–T19 participates in ATP binding. D63–S66 contacts GTP.

Belongs to the RapZ-like family.

Functionally, displays ATPase and GTPase activities. The chain is Nucleotide-binding protein LACR_1047 from Lactococcus lactis subsp. cremoris (strain SK11).